Consider the following 148-residue polypeptide: VVYKARDRVTNETIALKKIRLEQEDEGVPSTAIREISLLKEMQHRNIVRLQDVVHSEKRLYLVFEYLDLDLKKHMDSSPEFVKDPRQVKMFLYQMLCGIAYCHSHRVLHRDLKPQNLLIDRRTNCVKLADFGLARAFGIPVRTFTHEV.

ATP-binding positions include 1-2 and Lys-17; that span reads VV. The 148-residue stretch at 1 to 148 folds into the Protein kinase domain; that stretch reads VVYKARDRVT…IPVRTFTHEV (148 aa). Asp-111 serves as the catalytic Proton acceptor. Thr-145 carries the post-translational modification Phosphothreonine; by CAK.

The protein belongs to the protein kinase superfamily. CMGC Ser/Thr protein kinase family. CDC2/CDKX subfamily.

It catalyses the reaction L-seryl-[protein] + ATP = O-phospho-L-seryl-[protein] + ADP + H(+). The catalysed reaction is L-threonyl-[protein] + ATP = O-phospho-L-threonyl-[protein] + ADP + H(+). It carries out the reaction [DNA-directed RNA polymerase] + ATP = phospho-[DNA-directed RNA polymerase] + ADP + H(+). Phosphorylation inactivates the enzyme; while. Thr-145 phosphorylation is required for the catalytic activity of the enzyme. In terms of biological role, plays a key role in the control of the eukaryotic cell cycle. It is required in higher cells for entry into S-phase and mitosis. Component of the kinase complex that phosphorylates the repetitive C-terminus of RNA polymerase II. The chain is Cell division control protein 2 homolog 1 (CDC2) from Pisum sativum (Garden pea).